The sequence spans 118 residues: MKSLLFTLAVFMLLAQLVSGSWYVKKCLNDVGICKKKCKPEELHVKNGWAMCGKQRDCCVPADKRANYPAFCVQTKTTRTSTVTATTATRATTATTTTLMMTTASMSSMTPTPVSPTG.

The signal sequence occupies residues 1-20; that stretch reads MKSLLFTLAVFMLLAQLVSG. The interval 21–63 is in vitro binds to LPS, mediates antimicrobial activity and inhibits LPS-mediated inflammation; sequence SWYVKKCLNDVGICKKKCKPEELHVKNGWAMCGKQRDCCVPAD. Cystine bridges form between cysteine 27–cysteine 58, cysteine 34–cysteine 52, and cysteine 38–cysteine 59.

The protein belongs to the beta-defensin family. Homodimer or homooligomer; disulfide-linked. In terms of processing, O-glycosylated; glycans contain alpha(2,3)-linked sialic acids.

Its subcellular location is the secreted. In terms of biological role, highly glycosylated atypical beta-defensin involved in several aspects of sperm function. Facilitates sperm transport in the female reproductive tract and contributes to sperm protection against immunodetection; both functions are probably implicating the negative surface charge provided by its O-linked oligosaccharides in the sperm glycocalyx. Involved in binding of sperm to oviductal epithelial cells to form a sperm reservoir until ovulation. Release from the sperm surface during capacitation and ovaluation by an elevation of oviductal fluid pH is unmasking other surface components and allows sperm to penetrate the cumulus matrix and bind to the zona pellucida of the oocyte. In vitro has antimicrobial activity and may inhibit LPS-mediated inflammation. This is Beta-defensin 126 (DEFB126) from Pongo pygmaeus (Bornean orangutan).